The sequence spans 370 residues: Mesoderm posterior protein 2 (370 aa).

3 disordered regions span residues Pro51–Lys89, Ser231–Gln265, and Thr325–Leu350. Low complexity predominate over residues Pro57 to Ala77. Residues Gly79–Leu133 form the bHLH domain. Positions Thr325–Ala334 are enriched in polar residues. Positions Ser326–Gly330 are may contain a degradation domain.

In terms of processing, degraded by the proteasome. Post-translationally, phosphorylated.

The protein localises to the nucleus. Functionally, transcription factor with important role in somitogenesis. Defines the rostrocaudal patterning of the somite by participating in distinct Notch pathways. Also regulates the FGF signaling pathway. Specifies the rostral half of the somites. Generates rostro-caudal polarity of somites by down-regulating in the presumptive rostral domain DLL1, a Notch ligand. Participates in the segment border formation by activating in the anterior presomitic mesoderm LFNG, a negative regulator of DLL1-Notch signaling. Acts as a strong suppressor of Notch activity. Together with MESP1 is involved in the epithelialization of somitic mesoderm and in the development of cardiac mesoderm. May play a role with Tcf15 in the differentiation of myotomal and sclerotomal cells by regulating Pax family genes. Also controls the expression of the protocadherin PCDH8/PAPC, EPHA4, RIPPLY2, NOTCH2, FGFR1, and CER1. Binds to the E-boxes within the EPH4A and RIPPLY2 enhancers. This chain is Mesoderm posterior protein 2 (Mesp2), found in Mus musculus (Mouse).